Reading from the N-terminus, the 22-residue chain is GLLGGLLGPLLGGGGGGGGGLL.

The tract at residues 1–22 (GLLGGLLGPLLGGGGGGGGGLL) is disordered.

As to expression, expressed by the skin glands.

It is found in the secreted. Functionally, antimicrobial protein. Has antibacterial activity against the Gram-negative bacteria E.coli ATCC 28922 (MIC=50 uM), P.aeruginosa ATCC 9027 (MIC=8 uM) and C.freundii ATCC 8090 (MIC=75 uM). Does not have hemolytic activity. This chain is Leptoglycin, found in Leptodactylus pentadactylus (Smokey jungle frog).